The chain runs to 486 residues: UDP-N-acetylmuramate--L-alanine ligase (486 aa).

Residue 126-132 (GTHGKTS) coordinates ATP.

Belongs to the MurCDEF family.

It localises to the cytoplasm. It catalyses the reaction UDP-N-acetyl-alpha-D-muramate + L-alanine + ATP = UDP-N-acetyl-alpha-D-muramoyl-L-alanine + ADP + phosphate + H(+). Its pathway is cell wall biogenesis; peptidoglycan biosynthesis. Cell wall formation. This chain is UDP-N-acetylmuramate--L-alanine ligase, found in Corynebacterium glutamicum (strain ATCC 13032 / DSM 20300 / JCM 1318 / BCRC 11384 / CCUG 27702 / LMG 3730 / NBRC 12168 / NCIMB 10025 / NRRL B-2784 / 534).